We begin with the raw amino-acid sequence, 550 residues long: Probable terpene synthase 2 (550 aa).

Positions 305, 309, and 457 each coordinate Mg(2+). The short motif at 305–309 (DDIYD) is the DDXXD motif element.

Belongs to the terpene synthase family. Mg(2+) serves as cofactor.

Its function is as follows. Probable sesquiterpene synthase. This chain is Probable terpene synthase 2 (TPS2), found in Ricinus communis (Castor bean).